The sequence spans 273 residues: Spore development regulator vosA (273 aa).

Over residues 66–75 (STTQELQSTQ) the composition is skewed to low complexity. The interval 66–86 (STTQELQSTQPIAVRQQPRAA) is disordered. The Velvet domain occupies 70–253 (ELQSTQPIAV…KEQGCIISIK (184 aa)). The Nuclear localization signal signature appears at 211–218 (FPTLTEIK). The span at 254-267 (KGNERARPRGADGR) shows a compositional bias: basic and acidic residues. The segment at 254–273 (KGNERARPRGADGRSDDEDD) is disordered.

This sequence belongs to the velvet family. VosA subfamily. Forms a heterodimeric complex with velB; the formation of the velB-vosA complex is light-dependent.

It localises to the nucleus. Functionally, component of the velB-vosA heterodimeric complex that plays a dual role in activating genes associated with spore maturation and repressing certain development-associated genes. The complex binds DNA through the DNA-binding domain of vosA that recognizes an 11-nucleotide consensus sequence 5'-CTGGCCGCGGC-3' consisting of two motifs in the promoters of key developmental regulatory genes. Positively regulates the expression of wetA and represses abaA and brlA. Acts as a crucial regulator of both conidiation capacity and conidial quality. Responsible for the synthesis and accumulation of intracellular trehalose. The polypeptide is Spore development regulator vosA (Beauveria bassiana (strain ARSEF 2860) (White muscardine disease fungus)).